The primary structure comprises 105 residues: Pyrimidine/purine nucleoside phosphorylase (105 aa).

This sequence belongs to the nucleoside phosphorylase PpnP family.

The enzyme catalyses a purine D-ribonucleoside + phosphate = a purine nucleobase + alpha-D-ribose 1-phosphate. It catalyses the reaction adenosine + phosphate = alpha-D-ribose 1-phosphate + adenine. The catalysed reaction is cytidine + phosphate = cytosine + alpha-D-ribose 1-phosphate. It carries out the reaction guanosine + phosphate = alpha-D-ribose 1-phosphate + guanine. The enzyme catalyses inosine + phosphate = alpha-D-ribose 1-phosphate + hypoxanthine. It catalyses the reaction thymidine + phosphate = 2-deoxy-alpha-D-ribose 1-phosphate + thymine. The catalysed reaction is uridine + phosphate = alpha-D-ribose 1-phosphate + uracil. It carries out the reaction xanthosine + phosphate = alpha-D-ribose 1-phosphate + xanthine. Catalyzes the phosphorolysis of diverse nucleosides, yielding D-ribose 1-phosphate and the respective free bases. Can use uridine, adenosine, guanosine, cytidine, thymidine, inosine and xanthosine as substrates. Also catalyzes the reverse reactions. This is Pyrimidine/purine nucleoside phosphorylase from Cupriavidus pinatubonensis (strain JMP 134 / LMG 1197) (Cupriavidus necator (strain JMP 134)).